The chain runs to 246 residues: Allergin-1 (246 aa).

The signal sequence occupies residues Met-1–Ser-33. At Ile-34–Ser-150 the chain is on the extracellular side. The Ig-like C2-type domain maps to Pro-52–Ser-131. A glycan (N-linked (GlcNAc...) asparagine) is linked at Asn-68. Cys-73 and Cys-120 are disulfide-bonded. A helical membrane pass occupies residues Leu-151 to Ile-171. The Cytoplasmic segment spans residues His-172–His-246. 2 short sequence motifs (ITIM motif) span residues Ile-214–Pro-219 and Tyr-239–Leu-244. Phosphotyrosine is present on residues Tyr-216 and Tyr-241.

As to quaternary structure, monomer. Interacts (tyrosine-phosphorylated) with PTPN6, PTPN11 and INPP5D. Post-translationally, N-glycosylated. Expressed in myeloid cells (dendritic cells, macrophages and neutrophils but not in T-cells, B-cells or natural killer cells) and mast cells (at protein level).

Its subcellular location is the cell membrane. The protein localises to the secreted. In terms of biological role, immunoglobulin-like receptor which plays an inhibitory role in degranulation of mast cells. Negatively regulates IgE-mediated mast cell activation and suppresses the type I immediate hypersensitivity reaction. The chain is Allergin-1 (Milr1) from Mus musculus (Mouse).